Here is a 441-residue protein sequence, read N- to C-terminus: Glutamate--tRNA ligase 1 (441 aa).

Positions 7–17 (PSPTGYMHIGN) match the 'HIGH' region motif. A 'KMSKS' region motif is present at residues 236–240 (KMSKR). Lysine 239 provides a ligand contact to ATP.

It belongs to the class-I aminoacyl-tRNA synthetase family. Glutamate--tRNA ligase type 1 subfamily. In terms of assembly, monomer.

Its subcellular location is the cytoplasm. It carries out the reaction tRNA(Glu) + L-glutamate + ATP = L-glutamyl-tRNA(Glu) + AMP + diphosphate. In terms of biological role, catalyzes the attachment of glutamate to tRNA(Glu) in a two-step reaction: glutamate is first activated by ATP to form Glu-AMP and then transferred to the acceptor end of tRNA(Glu). This Anaplasma marginale (strain St. Maries) protein is Glutamate--tRNA ligase 1.